We begin with the raw amino-acid sequence, 627 residues long: uncharacterized protein (627 aa).

This is an uncharacterized protein from Caenorhabditis elegans.